Here is a 142-residue protein sequence, read N- to C-terminus: Small ribosomal subunit protein bS18m (142 aa).

It belongs to the bacterial ribosomal protein bS18 family. In terms of assembly, component of the mitochondrial small ribosomal subunit (mt-SSU). Mature mammalian 55S mitochondrial ribosomes consist of a small (28S) and a large (39S) subunit. The 28S small subunit contains a 12S ribosomal RNA (12S mt-rRNA) and 30 different proteins. The 39S large subunit contains a 16S rRNA (16S mt-rRNA), a copy of mitochondrial valine transfer RNA (mt-tRNA(Val)), which plays an integral structural role, and 52 different proteins. bS18m has a zinc binding site.

The protein resides in the mitochondrion. This is Small ribosomal subunit protein bS18m (MRPS18C) from Homo sapiens (Human).